Reading from the N-terminus, the 284-residue chain is 4-hydroxybenzoate octaprenyltransferase (284 aa).

A run of 8 helical transmembrane segments spans residues 16-36 (PIGI…ASDG), 40-60 (WTLL…GCAI), 91-111 (LLVA…LNTL), 132-152 (FFAI…PMGF), 157-177 (NTVP…AVAY), 206-226 (VAAV…VGWQ), 231-251 (TWFA…YTLI), and 259-279 (CFAA…GVVL).

This sequence belongs to the UbiA prenyltransferase family. It depends on Mg(2+) as a cofactor.

It localises to the cell inner membrane. It carries out the reaction all-trans-octaprenyl diphosphate + 4-hydroxybenzoate = 4-hydroxy-3-(all-trans-octaprenyl)benzoate + diphosphate. It functions in the pathway cofactor biosynthesis; ubiquinone biosynthesis. Functionally, catalyzes the prenylation of para-hydroxybenzoate (PHB) with an all-trans polyprenyl group. Mediates the second step in the final reaction sequence of ubiquinone-8 (UQ-8) biosynthesis, which is the condensation of the polyisoprenoid side chain with PHB, generating the first membrane-bound Q intermediate 3-octaprenyl-4-hydroxybenzoate. This is 4-hydroxybenzoate octaprenyltransferase from Herminiimonas arsenicoxydans.